Reading from the N-terminus, the 323-residue chain is MNSKIQKIELNDGHSIPVLGFGTYATEEHLKKKSMESTKIAIDVGFCHIDCSHLYQNEEEIGQAILSKIEDGTVKREDIFYTSKLWSTSHRPELVRPSLENSLRKLNLDYVDLYLIHFPVSLKPGNELLPKDEHGNLIFDTVDLCDTWEAMEKCKDAGLAKSIGVSNFNRRQLEMILNKPGLKYKPVCNQVECHLYLNQSKLLAYCKMNDIVLVAYGALGTQRYKYCINEDTPVLLDDPVLCAMAKKYKRTPALIALRYQLDRGIVALAKSFNEERIRENMQVFDFQLASDDMKILDGLDRNLRYFPADMFKAHPNFPFFDEY.

NADP(+)-binding positions include 20–24 (GFGTY) and Asp-50. Tyr-55 (proton donor) is an active-site residue. His-117 contacts substrate. NADP(+)-binding positions include 166–167 (SN), Gln-190, 216–221 (YGALGT), and 270–280 (KSFNEERIREN).

This sequence belongs to the aldo/keto reductase family. As to quaternary structure, monomer.

It is found in the cytoplasm. The enzyme catalyses (17R,20S)-17,20-dihydroxypregn-4-en-3-one + NADP(+) = 17alpha-hydroxyprogesterone + NADPH + H(+). The catalysed reaction is (17R,20S)-17,20-dihydroxypregn-4-en-3-one + NAD(+) = 17alpha-hydroxyprogesterone + NADH + H(+). Catalyzes the conversion of progesterone into 20-alpha-dihydroprogesterone (20 alpha-OHP). The polypeptide is Aldo-keto reductase family 1 member C18 (Akr1c18) (Mus musculus (Mouse)).